The primary structure comprises 782 residues: DnaJ homolog subfamily C member 16 (782 aa).

A signal peptide spans 1–25; that stretch reads MEVRKLSISWQFLIVLVLILQILSA. Residues 26 to 535 lie on the Cytoplasmic side of the membrane; that stretch reads LDFDPYKVLG…DSIFHNNWRE (510 aa). A J domain is found at 29–93; sequence DPYKVLGVSR…EKRSNYDQYG (65 aa). The Thioredoxin domain occupies 119–247; the sequence is FYFDESFFHF…LRQFVESLLP (129 aa). A helical; Anchor for type IV membrane protein membrane pass occupies residues 536–556; that stretch reads MMPLLSLIFSALFILFGTVIV. Over 557-782 the chain is Extracellular; sequence QAFSDSSDER…FYIPSWPELD (226 aa). The tract at residues 562 to 593 is disordered; the sequence is SSDERESSPPDKEEAQEKTGKTEPSFTKENSS. Residues 563 to 582 are compositionally biased toward basic and acidic residues; that stretch reads SDERESSPPDKEEAQEKTGK. Over residues 583–593 the composition is skewed to polar residues; sequence TEPSFTKENSS. The N-linked (GlcNAc...) asparagine glycan is linked to asparagine 631.

It is found in the endoplasmic reticulum membrane. Functionally, plays an important role in regulating the size of autophagosomes during the formation process. This is DnaJ homolog subfamily C member 16 (DNAJC16) from Pongo abelii (Sumatran orangutan).